The following is a 157-amino-acid chain: SsrA-binding protein (157 aa).

This sequence belongs to the SmpB family.

Its subcellular location is the cytoplasm. Its function is as follows. Required for rescue of stalled ribosomes mediated by trans-translation. Binds to transfer-messenger RNA (tmRNA), required for stable association of tmRNA with ribosomes. tmRNA and SmpB together mimic tRNA shape, replacing the anticodon stem-loop with SmpB. tmRNA is encoded by the ssrA gene; the 2 termini fold to resemble tRNA(Ala) and it encodes a 'tag peptide', a short internal open reading frame. During trans-translation Ala-aminoacylated tmRNA acts like a tRNA, entering the A-site of stalled ribosomes, displacing the stalled mRNA. The ribosome then switches to translate the ORF on the tmRNA; the nascent peptide is terminated with the 'tag peptide' encoded by the tmRNA and targeted for degradation. The ribosome is freed to recommence translation, which seems to be the essential function of trans-translation. The protein is SsrA-binding protein of Aquifex aeolicus (strain VF5).